The following is an 81-amino-acid chain: N.vectensis toxin 4 (81 aa).

Positions 1–20 (MRSSWMFVICFAMLILYTNG) are cleaved as a signal peptide. 3 disulfides stabilise this stretch: Cys-46-Cys-75, Cys-48-Cys-70, and Cys-63-Cys-76.

In terms of tissue distribution, expressed in ectodermal gland cells. In adult female tissues, highly transcribed in mesenteries (gametes-producing tissue) and slightly transcribed in tentacles, pharynx and physa.

Functionally, has toxic effects on zebrafish larvae. It causes contractile paralysis and twitching of the tail within 30 minutes, followed by death within 40 minutes. Does not show any toxicity when injected into arthropods (cherry shrimps or grass shrimps). This chain is N.vectensis toxin 4, found in Nematostella vectensis (Starlet sea anemone).